We begin with the raw amino-acid sequence, 211 residues long: Thymidylate kinase (211 aa).

10–17 provides a ligand contact to ATP; that stretch reads GVEGCGKT.

This sequence belongs to the thymidylate kinase family.

It carries out the reaction dTMP + ATP = dTDP + ADP. Functionally, phosphorylation of dTMP to form dTDP in both de novo and salvage pathways of dTTP synthesis. The protein is Thymidylate kinase of Nostoc punctiforme (strain ATCC 29133 / PCC 73102).